The following is a 473-amino-acid chain: Sorting nexin-17 (473 aa).

The region spanning 1-108 (MHFSIPETEV…SFLRKAQQET (108 aa)) is the PX domain. 4 residues coordinate a 1,2-diacyl-sn-glycero-3-phospho-(1D-myo-inositol-3-phosphate): arginine 35, serine 37, lysine 61, and arginine 74. One can recognise a Ras-associating domain in the interval 114-205 (EEVQLEIYLS…YRIILRKSYW (92 aa)). Residues 114–433 (EEVQLEIYLS…DPNREQVVKL (320 aa)) form an FERM-like region. Residues 269 to 433 (GYIKFDPCIT…DPNREQVVKL (165 aa)) are PTB-like F3 module. Positions 391-431 (SIKKQMQKKRLNGSLQRSDSQQAVKSPPILDSPDPNREQVV) are disordered. Residues 403–414 (GSLQRSDSQQAV) are compositionally biased toward polar residues.

This sequence belongs to the sorting nexin family. As to quaternary structure, monomer. Interacts with CCDC22, CCDC93, DSCR3 and VPS35L; the interaction with DSCR3 is direct and associates SNX17 with the retriever and CCC complexes.

It localises to the cytoplasm. It is found in the early endosome. The protein localises to the cytoplasmic vesicle membrane. Its function is as follows. Critical regulator of endosomal recycling of numerous surface proteins, including integrins, signaling receptor and channels. Binds to NPxY sequences in the cytoplasmic tails of target cargos. Associates with retriever and CCC complexes to prevent lysosomal degradation and promote cell surface recycling of numerous cargos such as integrins ITGB1, ITGB5 and their associated alpha subunits. Also required for maintenance of normal cell surface levels of APP and LRP1. Interacts with membranes containing phosphatidylinositol 3-phosphate (PtdIns(3P)). This Danio rerio (Zebrafish) protein is Sorting nexin-17 (snx17).